The sequence spans 291 residues: Small ribosomal subunit protein uS2 (291 aa).

Positions 256 to 291 (STTAPPNWEATGGDWATSTAPAEGWAGDAPAGETKW) are disordered.

The protein belongs to the universal ribosomal protein uS2 family. Component of the small ribosomal subunit. Mature ribosomes consist of a small (40S) and a large (60S) subunit. The 40S subunit contains about 33 different proteins and 1 molecule of RNA (18S). The 60S subunit contains about 49 different proteins and 3 molecules of RNA (25S, 5.8S and 5S). Interacts with RPS21.

Its subcellular location is the cytoplasm. Functionally, required for the assembly and/or stability of the 40S ribosomal subunit. Required for the processing of the 20S rRNA-precursor to mature 18S rRNA in a late step of the maturation of 40S ribosomal subunits. The chain is Small ribosomal subunit protein uS2 from Coccidioides immitis (strain RS) (Valley fever fungus).